The chain runs to 173 residues: Large ribosomal subunit protein bL9 (173 aa).

The segment at 151-173 (YDDTPDRTETEESTKELQEEHAE) is disordered.

It belongs to the bacterial ribosomal protein bL9 family.

Binds to the 23S rRNA. In Lawsonia intracellularis (strain PHE/MN1-00), this protein is Large ribosomal subunit protein bL9.